A 124-amino-acid polypeptide reads, in one-letter code: Small ribosomal subunit protein bS6 (124 aa).

A disordered region spans residues 99–124; the sequence is PLPAPRVMPGSEAAQQQQAEAAASAD. A compositionally biased stretch (low complexity) spans 109-124; the sequence is SEAAQQQQAEAAASAD.

It belongs to the bacterial ribosomal protein bS6 family.

In terms of biological role, binds together with bS18 to 16S ribosomal RNA. In Synechococcus sp. (strain CC9605), this protein is Small ribosomal subunit protein bS6.